The chain runs to 409 residues: Carbamoyl phosphate synthase arginine-specific small chain (409 aa).

One can recognise a Glutamine amidotransferase type-1 domain in the interval 197–389 (NVALIDCGVK…FDNMSQYRAL (193 aa)). The Nucleophile role is filled by cysteine 277. Active-site residues include histidine 362 and glutamate 364.

It belongs to the CarA family. Heterodimer composed of 2 chains; the small (or glutamine) chain promotes the hydrolysis of glutamine to ammonia, which is used by the large (or ammonia) chain to synthesize carbamoyl phosphate.

Its subcellular location is the cytoplasm. It catalyses the reaction hydrogencarbonate + L-glutamine + 2 ATP + H2O = carbamoyl phosphate + L-glutamate + 2 ADP + phosphate + 2 H(+). It carries out the reaction L-glutamine + H2O = L-glutamate + NH4(+). Its pathway is amino-acid biosynthesis; L-arginine biosynthesis; carbamoyl phosphate from bicarbonate: step 1/1. Its function is as follows. Small subunit of the arginine-specific carbamoyl phosphate synthase (CPSase). CPSase catalyzes the formation of carbamoyl phosphate from the ammonia moiety of glutamine, carbonate, and phosphate donated by ATP, constituting the first step of 2 biosynthetic pathways, one leading to arginine and/or urea and the other to pyrimidine nucleotides. The small subunit (glutamine amidotransferase) binds and cleaves glutamine to supply the large subunit with the substrate ammonia. This is Carbamoyl phosphate synthase arginine-specific small chain (CPA1) from Kluyveromyces lactis (strain ATCC 8585 / CBS 2359 / DSM 70799 / NBRC 1267 / NRRL Y-1140 / WM37) (Yeast).